Consider the following 197-residue polypeptide: Small ribosomal subunit protein uS5 (197 aa).

The segment at 1–27 (MAEREQRGGRDQRGGGRERKEREERDS) is disordered. Positions 29-92 (FVDKLVHINR…ESAKRNLTRV (64 aa)) constitute an S5 DRBM domain.

Belongs to the universal ribosomal protein uS5 family. As to quaternary structure, part of the 30S ribosomal subunit. Contacts proteins S4 and S8.

With S4 and S12 plays an important role in translational accuracy. Its function is as follows. Located at the back of the 30S subunit body where it stabilizes the conformation of the head with respect to the body. In Bradyrhizobium diazoefficiens (strain JCM 10833 / BCRC 13528 / IAM 13628 / NBRC 14792 / USDA 110), this protein is Small ribosomal subunit protein uS5.